A 514-amino-acid chain; its full sequence is Peptide chain release factor 3 (514 aa).

The tr-type G domain occupies 8-268 (KKRRTFAIIS…TFLEFAPEPH (261 aa)). GTP is bound by residues 17-24 (SHPDAGKT), 85-89 (DTPGH), and 139-142 (NKLD).

It belongs to the TRAFAC class translation factor GTPase superfamily. Classic translation factor GTPase family. PrfC subfamily.

The protein localises to the cytoplasm. Its function is as follows. Increases the formation of ribosomal termination complexes and stimulates activities of RF-1 and RF-2. It binds guanine nucleotides and has strong preference for UGA stop codons. It may interact directly with the ribosome. The stimulation of RF-1 and RF-2 is significantly reduced by GTP and GDP, but not by GMP. The chain is Peptide chain release factor 3 from Streptococcus pyogenes serotype M28 (strain MGAS6180).